The primary structure comprises 380 residues: Cystathionine beta-lyase (380 aa).

An N6-(pyridoxal phosphate)lysine modification is found at Lys196.

Belongs to the trans-sulfuration enzymes family. Pyridoxal 5'-phosphate is required as a cofactor.

It is found in the cytoplasm. The catalysed reaction is L,L-cystathionine + H2O = L-homocysteine + pyruvate + NH4(+). It catalyses the reaction an S-substituted L-cysteine + H2O = a thiol + pyruvate + NH4(+). It participates in amino-acid biosynthesis; L-methionine biosynthesis via de novo pathway; L-homocysteine from L-cystathionine: step 1/1. Its function is as follows. The enzymatic degradation of amino acids in cheese is believed to generate aroma compounds and therefore to be essential for flavor development. Cystathionine beta-lyase (CBL) can convert cystathionine to homocysteine but is also able to catalyze an alpha, gamma elimination. With methionine as a substrate, it produces volatile sulfur compounds which are important for flavor formation in Gouda cheese. The polypeptide is Cystathionine beta-lyase (metC) (Lactococcus lactis subsp. lactis (strain IL1403) (Streptococcus lactis)).